The chain runs to 109 residues: A-type ATP synthase subunit F (109 aa).

This sequence belongs to the V-ATPase F subunit family. As to quaternary structure, has multiple subunits with at least A(3), B(3), C, D, E, F, H, I and proteolipid K(x).

The protein resides in the cell membrane. Functionally, component of the A-type ATP synthase that produces ATP from ADP in the presence of a proton gradient across the membrane. This is A-type ATP synthase subunit F from Halorubrum lacusprofundi (strain ATCC 49239 / DSM 5036 / JCM 8891 / ACAM 34).